The sequence spans 360 residues: Ribosomal RNA large subunit methyltransferase M (360 aa).

S-adenosyl-L-methionine contacts are provided by residues S187, 220–223, D239, D259, and D276; that span reads CPGG. K305 acts as the Proton acceptor in catalysis.

The protein belongs to the class I-like SAM-binding methyltransferase superfamily. RNA methyltransferase RlmE family. RlmM subfamily. Monomer.

Its subcellular location is the cytoplasm. The enzyme catalyses cytidine(2498) in 23S rRNA + S-adenosyl-L-methionine = 2'-O-methylcytidine(2498) in 23S rRNA + S-adenosyl-L-homocysteine + H(+). Functionally, catalyzes the 2'-O-methylation at nucleotide C2498 in 23S rRNA. In Photobacterium profundum (strain SS9), this protein is Ribosomal RNA large subunit methyltransferase M.